A 546-amino-acid chain; its full sequence is Glucose-6-phosphate isomerase (546 aa).

The active-site Proton donor is E353. Active-site residues include H384 and K512.

It belongs to the GPI family.

It is found in the cytoplasm. It catalyses the reaction alpha-D-glucose 6-phosphate = beta-D-fructose 6-phosphate. The protein operates within carbohydrate biosynthesis; gluconeogenesis. It participates in carbohydrate degradation; glycolysis; D-glyceraldehyde 3-phosphate and glycerone phosphate from D-glucose: step 2/4. Catalyzes the reversible isomerization of glucose-6-phosphate to fructose-6-phosphate. This Actinobacillus pleuropneumoniae serotype 3 (strain JL03) protein is Glucose-6-phosphate isomerase.